Reading from the N-terminus, the 689-residue chain is Glycine--tRNA ligase beta subunit (689 aa).

Belongs to the class-II aminoacyl-tRNA synthetase family. Tetramer of two alpha and two beta subunits.

The protein localises to the cytoplasm. The catalysed reaction is tRNA(Gly) + glycine + ATP = glycyl-tRNA(Gly) + AMP + diphosphate. The polypeptide is Glycine--tRNA ligase beta subunit (Shewanella baltica (strain OS185)).